The following is a 190-amino-acid chain: Protein GrpE (190 aa).

The segment covering 1–18 (MTETPNTSSEEIQTSEPS) has biased composition (polar residues). The interval 1 to 21 (MTETPNTSSEEIQTSEPSPDN) is disordered.

This sequence belongs to the GrpE family. In terms of assembly, homodimer.

Its subcellular location is the cytoplasm. In terms of biological role, participates actively in the response to hyperosmotic and heat shock by preventing the aggregation of stress-denatured proteins, in association with DnaK and GrpE. It is the nucleotide exchange factor for DnaK and may function as a thermosensor. Unfolded proteins bind initially to DnaJ; upon interaction with the DnaJ-bound protein, DnaK hydrolyzes its bound ATP, resulting in the formation of a stable complex. GrpE releases ADP from DnaK; ATP binding to DnaK triggers the release of the substrate protein, thus completing the reaction cycle. Several rounds of ATP-dependent interactions between DnaJ, DnaK and GrpE are required for fully efficient folding. The chain is Protein GrpE from Chlamydia trachomatis serovar A (strain ATCC VR-571B / DSM 19440 / HAR-13).